Consider the following 109-residue polypeptide: Thioredoxin 1 (109 aa).

One can recognise a Thioredoxin domain in the interval 2–109; the sequence is SDKIIHLTDD…LKEFLDANLA (108 aa). Active-site nucleophile residues include Cys33 and Cys36. Cys33 and Cys36 are disulfide-bonded. At Lys70 the chain carries N6-acetyllysine.

It belongs to the thioredoxin family. Monomer.

In terms of biological role, participates in various redox reactions through the reversible oxidation of its active center dithiol to a disulfide and catalyzes dithiol-disulfide exchange reactions. The sequence is that of Thioredoxin 1 (trxA) from Escherichia coli O157:H7.